Reading from the N-terminus, the 127-residue chain is Large ribosomal subunit protein bL20c (127 aa).

This sequence belongs to the bacterial ribosomal protein bL20 family.

The protein localises to the plastid. Its subcellular location is the chloroplast. Functionally, binds directly to 23S ribosomal RNA and is necessary for the in vitro assembly process of the 50S ribosomal subunit. It is not involved in the protein synthesizing functions of that subunit. This is Large ribosomal subunit protein bL20c from Jasminum nudiflorum (Winter jasmine).